Consider the following 59-residue polypeptide: Transcription elongation factor Spt4 (59 aa).

Residues C4, C7, C16, and C19 each contribute to the Zn(2+) site.

It belongs to the archaeal Spt4 family. In terms of assembly, heterodimer composed of Spt4 and Spt5.

Functionally, stimulates transcription elongation. This Methanocaldococcus jannaschii (strain ATCC 43067 / DSM 2661 / JAL-1 / JCM 10045 / NBRC 100440) (Methanococcus jannaschii) protein is Transcription elongation factor Spt4.